We begin with the raw amino-acid sequence, 31 residues long: Cytochrome b6-f complex subunit 6 (31 aa).

The chain crosses the membrane as a helical span at residues 4 to 26 (ITSYFGFLLAALTITPALLISLN).

The protein belongs to the PetL family. In terms of assembly, the 4 large subunits of the cytochrome b6-f complex are cytochrome b6, subunit IV (17 kDa polypeptide, PetD), cytochrome f and the Rieske protein, while the 4 small subunits are PetG, PetL, PetM and PetN. The complex functions as a dimer.

The protein resides in the plastid. It localises to the chloroplast thylakoid membrane. Functionally, component of the cytochrome b6-f complex, which mediates electron transfer between photosystem II (PSII) and photosystem I (PSI), cyclic electron flow around PSI, and state transitions. PetL is important for photoautotrophic growth as well as for electron transfer efficiency and stability of the cytochrome b6-f complex. The sequence is that of Cytochrome b6-f complex subunit 6 from Dioscorea elephantipes (Elephant's foot yam).